Reading from the N-terminus, the 592-residue chain is Aspartate--tRNA ligase (592 aa).

E171 lines the L-aspartate pocket. An aspartate region spans residues 195 to 198 (QLFK). R217 contributes to the L-aspartate binding site. Residues 217 to 219 (RDE) and Q226 each bind ATP. L-aspartate is bound at residue H448. E482 is a binding site for ATP. R489 lines the L-aspartate pocket. 534–537 (GLDR) serves as a coordination point for ATP.

It belongs to the class-II aminoacyl-tRNA synthetase family. Type 1 subfamily. Homodimer.

The protein localises to the cytoplasm. It carries out the reaction tRNA(Asp) + L-aspartate + ATP = L-aspartyl-tRNA(Asp) + AMP + diphosphate. Functionally, catalyzes the attachment of L-aspartate to tRNA(Asp) in a two-step reaction: L-aspartate is first activated by ATP to form Asp-AMP and then transferred to the acceptor end of tRNA(Asp). This Vibrio campbellii (strain ATCC BAA-1116) protein is Aspartate--tRNA ligase.